We begin with the raw amino-acid sequence, 512 residues long: 2-isopropylmalate synthase (512 aa).

Residues 4-266 (IQFFDTTLRD…ETNIVLNQFK (263 aa)) form the Pyruvate carboxyltransferase domain. Mn(2+) is bound by residues Asp-13, His-201, His-203, and Asn-237. The interval 390-512 (ELKHLQVQYV…SKQADFEEVK (123 aa)) is regulatory domain.

This sequence belongs to the alpha-IPM synthase/homocitrate synthase family. LeuA type 1 subfamily. In terms of assembly, homodimer. The cofactor is Mn(2+).

It is found in the cytoplasm. The enzyme catalyses 3-methyl-2-oxobutanoate + acetyl-CoA + H2O = (2S)-2-isopropylmalate + CoA + H(+). Its pathway is amino-acid biosynthesis; L-leucine biosynthesis; L-leucine from 3-methyl-2-oxobutanoate: step 1/4. Catalyzes the condensation of the acetyl group of acetyl-CoA with 3-methyl-2-oxobutanoate (2-ketoisovalerate) to form 3-carboxy-3-hydroxy-4-methylpentanoate (2-isopropylmalate). The chain is 2-isopropylmalate synthase from Listeria innocua serovar 6a (strain ATCC BAA-680 / CLIP 11262).